We begin with the raw amino-acid sequence, 345 residues long: Protein-glutamate methylesterase/protein-glutamine glutaminase (345 aa).

The Response regulatory domain maps to 5 to 123 (KVIVVDDSVL…ELSKMKDDLI (119 aa)). D56 carries the 4-aspartylphosphate modification. Residues 153 to 343 (SSDSIEAVVI…DEIIKIVRGL (191 aa)) form the CheB-type methylesterase domain. Residues S165, H192, and D285 contribute to the active site.

This sequence belongs to the CheB family. Phosphorylated by CheA. Phosphorylation of the N-terminal regulatory domain activates the methylesterase activity.

The protein localises to the cytoplasm. It carries out the reaction [protein]-L-glutamate 5-O-methyl ester + H2O = L-glutamyl-[protein] + methanol + H(+). The catalysed reaction is L-glutaminyl-[protein] + H2O = L-glutamyl-[protein] + NH4(+). In terms of biological role, involved in chemotaxis. Part of a chemotaxis signal transduction system that modulates chemotaxis in response to various stimuli. Catalyzes the demethylation of specific methylglutamate residues introduced into the chemoreceptors (methyl-accepting chemotaxis proteins or MCP) by CheR. Also mediates the irreversible deamidation of specific glutamine residues to glutamic acid. The chain is Protein-glutamate methylesterase/protein-glutamine glutaminase from Clostridium acetobutylicum (strain ATCC 824 / DSM 792 / JCM 1419 / IAM 19013 / LMG 5710 / NBRC 13948 / NRRL B-527 / VKM B-1787 / 2291 / W).